The primary structure comprises 468 residues: UDP-N-acetylmuramate--L-alanine ligase (468 aa).

Residue 114 to 120 (GTHGKTT) coordinates ATP.

It belongs to the MurCDEF family.

The protein resides in the cytoplasm. It carries out the reaction UDP-N-acetyl-alpha-D-muramate + L-alanine + ATP = UDP-N-acetyl-alpha-D-muramoyl-L-alanine + ADP + phosphate + H(+). The protein operates within cell wall biogenesis; peptidoglycan biosynthesis. In terms of biological role, cell wall formation. This chain is UDP-N-acetylmuramate--L-alanine ligase, found in Brucella anthropi (strain ATCC 49188 / DSM 6882 / CCUG 24695 / JCM 21032 / LMG 3331 / NBRC 15819 / NCTC 12168 / Alc 37) (Ochrobactrum anthropi).